Reading from the N-terminus, the 431-residue chain is Large envelope protein (431 aa).

Gly-2 carries the N-myristoyl glycine; by host lipid modification. Residues 2-148 (GNNIKVTFNP…PPLRDTHPHL (147 aa)) are pre-S1. The interval 2–207 (GNNIKVTFNP…PSTTGDPALS (206 aa)) is pre-S. At 2–214 (GNNIKVTFNP…ALSPEMSPSS (213 aa)) the chain is on the virion surface; in external conformation side. The Intravirion; in internal conformation segment spans residues 2 to 286 (GNNIKVTFNP…NGFRWMYLRR (285 aa)). Asn-3 carries N-linked (GlcNAc...) asparagine glycosylation. The disordered stretch occupies residues 115 to 147 (IPRGLVPPQTPTNRDQGRKPTPPTPPLRDTHPH). The pre-S2 stretch occupies residues 149 to 207 (TMKNQTFHLQGFVDGLRDLTTTERQHNAYGDPFTTLSPAVPTVSTILSPPSTTGDPALS). The helical transmembrane segment at 215–235 (LLGLLAGLQVVYFLWTKILTI) threads the bilayer. Residues 236–286 (AQNLDWWWTSLSFPGGIPECTGQNSQFQTCKHLPTSCPPTCNGFRWMYLRR) lie on the Intravirion; in external conformation side of the membrane. Residues 287 to 307 (FIIYLLVLLLCLIFLLVLLDW) traverse the membrane as a helical segment. The Virion surface portion of the chain corresponds to 308–379 (KGFIPVCPLQ…WALARFSWLN (72 aa)). N-linked (GlcNAc...) asparagine; by host glycosylation is present at Asn-351. A helical membrane pass occupies residues 380-400 (LLVPLLQWLGGISLIAWFLLI). Residues 401–406 (WMIWFW) are Intravirion-facing. The chain crosses the membrane as a helical span at residues 407-429 (GPALLSILPPFIPIFVLFFLIWV). Residues 430-431 (YI) are Virion surface-facing.

It belongs to the orthohepadnavirus major surface antigen family. In its internal form (Li-HBsAg), interacts with the capsid protein and with the isoform S. Interacts with host chaperone CANX. In terms of assembly, associates with host chaperone CANX through its pre-S2 N glycan; this association may be essential for isoform M proper secretion. As to quaternary structure, interacts with isoform L. Interacts with the antigens of satellite virus HDV (HDVAgs); this interaction is required for encapsidation of HDV genomic RNA. Isoform M is N-terminally acetylated by host at a ratio of 90%, and N-glycosylated by host at the pre-S2 region. In terms of processing, myristoylated.

The protein localises to the virion membrane. In terms of biological role, the large envelope protein exists in two topological conformations, one which is termed 'external' or Le-HBsAg and the other 'internal' or Li-HBsAg. In its external conformation the protein attaches the virus to cell receptors and thereby initiating infection. This interaction determines the species specificity and liver tropism. This attachment induces virion internalization predominantly through caveolin-mediated endocytosis. The large envelope protein also assures fusion between virion membrane and endosomal membrane. In its internal conformation the protein plays a role in virion morphogenesis and mediates the contact with the nucleocapsid like a matrix protein. Functionally, the middle envelope protein plays an important role in the budding of the virion. It is involved in the induction of budding in a nucleocapsid independent way. In this process the majority of envelope proteins bud to form subviral lipoprotein particles of 22 nm of diameter that do not contain a nucleocapsid. In Marmota monax (Woodchuck), this protein is Large envelope protein.